Reading from the N-terminus, the 524-residue chain is Cytochrome P450 1A1 (524 aa).

Positions 33-44 (WQPRLPKGLKSP) are mitochondrial targeting signal. S71 carries O-linked (GlcNAc) serine glycosylation. Position 228 (F228) interacts with substrate. C461 contacts heme.

This sequence belongs to the cytochrome P450 family. As to quaternary structure, interacts with cytosolic chaperones HSP70 and HSP90; this interaction is required for initial targeting to mitochondria. Interacts (via mitochondrial targeting signal) with TOMM40 (via N-terminus); this interaction is required for translocation across the mitochondrial outer membrane. Heme serves as cofactor.

It localises to the endoplasmic reticulum membrane. Its subcellular location is the mitochondrion inner membrane. It is found in the microsome membrane. The protein resides in the cytoplasm. It carries out the reaction an organic molecule + reduced [NADPH--hemoprotein reductase] + O2 = an alcohol + oxidized [NADPH--hemoprotein reductase] + H2O + H(+). The catalysed reaction is estrone + reduced [NADPH--hemoprotein reductase] + O2 = 2-hydroxyestrone + oxidized [NADPH--hemoprotein reductase] + H2O + H(+). The enzyme catalyses estrone + reduced [NADPH--hemoprotein reductase] + O2 = 4-hydroxyestrone + oxidized [NADPH--hemoprotein reductase] + H2O + H(+). It catalyses the reaction estrone + reduced [NADPH--hemoprotein reductase] + O2 = 6alpha-hydroxyestrone + oxidized [NADPH--hemoprotein reductase] + H2O + H(+). It carries out the reaction estrone + reduced [NADPH--hemoprotein reductase] + O2 = 15alpha-hydroxyestrone + oxidized [NADPH--hemoprotein reductase] + H2O + H(+). The catalysed reaction is estrone + reduced [NADPH--hemoprotein reductase] + O2 = 16alpha-hydroxyestrone + oxidized [NADPH--hemoprotein reductase] + H2O + H(+). The enzyme catalyses 17beta-estradiol + reduced [NADPH--hemoprotein reductase] + O2 = 2-hydroxy-17beta-estradiol + oxidized [NADPH--hemoprotein reductase] + H2O + H(+). It catalyses the reaction 17beta-estradiol + reduced [NADPH--hemoprotein reductase] + O2 = 4-hydroxy-17beta-estradiol + oxidized [NADPH--hemoprotein reductase] + H2O + H(+). It carries out the reaction 17beta-estradiol + reduced [NADPH--hemoprotein reductase] + O2 = 6alpha-hydroxy-17beta-estradiol + oxidized [NADPH--hemoprotein reductase] + H2O + H(+). The catalysed reaction is 17beta-estradiol + reduced [NADPH--hemoprotein reductase] + O2 = 7alpha-hydroxy-17beta-estradiol + oxidized [NADPH--hemoprotein reductase] + H2O + H(+). The enzyme catalyses 17beta-estradiol + reduced [NADPH--hemoprotein reductase] + O2 = 15alpha-hydroxy-17beta-estradiol + oxidized [NADPH--hemoprotein reductase] + H2O + H(+). It catalyses the reaction (5Z,8Z,11Z)-eicosatrienoate + reduced [NADPH--hemoprotein reductase] + O2 = 19-hydroxy-(5Z,8Z,11Z)-eicosatrienoate + oxidized [NADPH--hemoprotein reductase] + H2O + H(+). It carries out the reaction (5Z,8Z,11Z,14Z)-eicosatetraenoate + reduced [NADPH--hemoprotein reductase] + O2 = 16-hydroxy-(5Z,8Z,11Z,14Z)-eicosatetraenoate + oxidized [NADPH--hemoprotein reductase] + H2O + H(+). The catalysed reaction is (5Z,8Z,11Z,14Z)-eicosatetraenoate + reduced [NADPH--hemoprotein reductase] + O2 = 17-hydroxy-(5Z,8Z,11Z,14Z)-eicosatetraenoate + oxidized [NADPH--hemoprotein reductase] + H2O + H(+). The enzyme catalyses (5Z,8Z,11Z,14Z)-eicosatetraenoate + reduced [NADPH--hemoprotein reductase] + O2 = 18-hydroxy-(5Z,8Z,11Z,14Z)-eicosatetraenoate + oxidized [NADPH--hemoprotein reductase] + H2O + H(+). It catalyses the reaction (5Z,8Z,11Z,14Z)-eicosatetraenoate + reduced [NADPH--hemoprotein reductase] + O2 = 19-hydroxy-(5Z,8Z,11Z,14Z)-eicosatetraenoate + oxidized [NADPH--hemoprotein reductase] + H2O + H(+). It carries out the reaction (5Z,8Z,11Z,14Z,17Z)-eicosapentaenoate + reduced [NADPH--hemoprotein reductase] + O2 = 19-hydroxy-(5Z,8Z,11Z,14Z,17Z)-eicosapentaenoate + oxidized [NADPH--hemoprotein reductase] + H2O + H(+). The catalysed reaction is (5Z,8Z,11Z,14Z)-eicosatetraenoate + reduced [NADPH--hemoprotein reductase] + O2 = (8R,9S)-epoxy-(5Z,11Z,14Z)-eicosatrienoate + oxidized [NADPH--hemoprotein reductase] + H2O + H(+). The enzyme catalyses (5Z,8Z,11Z,14Z)-eicosatetraenoate + reduced [NADPH--hemoprotein reductase] + O2 = (11R,12S)-epoxy-(5Z,8Z,14Z)-eicosatrienoate + oxidized [NADPH--hemoprotein reductase] + H2O + H(+). It catalyses the reaction (5Z,8Z,11Z,14Z)-eicosatetraenoate + reduced [NADPH--hemoprotein reductase] + O2 = (14S,15R)-epoxy-(5Z,8Z,11Z)-eicosatrienoate + oxidized [NADPH--hemoprotein reductase] + H2O + H(+). It carries out the reaction (5Z,8Z,11Z,14Z)-eicosatetraenoate + reduced [NADPH--hemoprotein reductase] + O2 = (14R,15S)-epoxy-(5Z,8Z,11Z)-eicosatrienoate + oxidized [NADPH--hemoprotein reductase] + H2O + H(+). The catalysed reaction is (5Z,8Z,11Z,14Z,17Z)-eicosapentaenoate + reduced [NADPH--hemoprotein reductase] + O2 = (17R,18S)-epoxy-(5Z,8Z,11Z,14Z)-eicosatetraenoate + oxidized [NADPH--hemoprotein reductase] + H2O + H(+). The enzyme catalyses (4Z,7Z,10Z,13Z,16Z,19Z)-docosahexaenoate + reduced [NADPH--hemoprotein reductase] + O2 = (19S,20R)-epoxy-(4Z,7Z,10Z,13Z,16Z)-docosapentaenoate + oxidized [NADPH--hemoprotein reductase] + H2O + H(+). It catalyses the reaction (4Z,7Z,10Z,13Z,16Z,19Z)-docosahexaenoate + reduced [NADPH--hemoprotein reductase] + O2 = (19R,20S)-epoxy-(4Z,7Z,10Z,13Z,16Z)-docosapentaenoate + oxidized [NADPH--hemoprotein reductase] + H2O + H(+). It carries out the reaction all-trans-retinol + reduced [NADPH--hemoprotein reductase] + O2 = all-trans-retinal + oxidized [NADPH--hemoprotein reductase] + 2 H2O + H(+). The catalysed reaction is all-trans-retinal + reduced [NADPH--hemoprotein reductase] + O2 = all-trans-retinoate + oxidized [NADPH--hemoprotein reductase] + H2O + 2 H(+). The enzyme catalyses (13S)-hydroperoxy-(9Z,11E)-octadecadienoate = 13-oxo-(9Z,11E)-octadecadienoate + H2O. It catalyses the reaction (12S)-hydroperoxy-(5Z,8Z,10E,14Z)-eicosatetraenoate = 12-oxo-(5Z,8Z,10E,14Z)-eicosatetraenoate + H2O. It carries out the reaction (15S)-hydroperoxy-(5Z,8Z,11Z,13E)-eicosatetraenoate = 15-oxo-(5Z,8Z,11Z,13E)-eicosatetraenoate + H2O. The catalysed reaction is (5S)-hydroperoxy-(6E,8Z,11Z,14Z)-eicosatetraenoate = 5-oxo-(6E,8Z,11Z,14Z)-eicosatetraenoate + H2O. It functions in the pathway steroid hormone biosynthesis. It participates in lipid metabolism; fatty acid metabolism. The protein operates within cofactor metabolism; retinol metabolism. Its function is as follows. A cytochrome P450 monooxygenase involved in the metabolism of various endogenous substrates, including fatty acids, steroid hormones and vitamins. Mechanistically, uses molecular oxygen inserting one oxygen atom into a substrate, and reducing the second into a water molecule, with two electrons provided by NADPH via cytochrome P450 reductase (CPR; NADPH-ferrihemoprotein reductase). Catalyzes the hydroxylation of carbon-hydrogen bonds. Exhibits high catalytic activity for the formation of hydroxyestrogens from estrone (E1) and 17beta-estradiol (E2), namely 2-hydroxy E1 and E2, as well as D-ring hydroxylated E1 and E2 at the C15alpha and C16alpha positions. Displays different regioselectivities for polyunsaturated fatty acids (PUFA) hydroxylation. Catalyzes the epoxidation of double bonds of certain PUFA. Converts arachidonic acid toward epoxyeicosatrienoic acid (EET) regioisomers, 8,9-, 11,12-, and 14,15-EET, that function as lipid mediators in the vascular system. Displays an absolute stereoselectivity in the epoxidation of eicosapentaenoic acid (EPA) producing the 17(R),18(S) enantiomer. May play an important role in all-trans retinoic acid biosynthesis in extrahepatic tissues. Catalyzes two successive oxidative transformation of all-trans retinol to all-trans retinal and then to the active form all-trans retinoic acid. May also participate in eicosanoids metabolism by converting hydroperoxide species into oxo metabolites (lipoxygenase-like reaction, NADPH-independent). The protein is Cytochrome P450 1A1 (CYP1A1) of Canis lupus familiaris (Dog).